The primary structure comprises 342 residues: N-acetyl-gamma-glutamyl-phosphate reductase (342 aa).

Residue cysteine 147 is part of the active site.

The protein belongs to the NAGSA dehydrogenase family. Type 1 subfamily.

Its subcellular location is the cytoplasm. It catalyses the reaction N-acetyl-L-glutamate 5-semialdehyde + phosphate + NADP(+) = N-acetyl-L-glutamyl 5-phosphate + NADPH + H(+). The protein operates within amino-acid biosynthesis; L-arginine biosynthesis; N(2)-acetyl-L-ornithine from L-glutamate: step 3/4. In terms of biological role, catalyzes the NADPH-dependent reduction of N-acetyl-5-glutamyl phosphate to yield N-acetyl-L-glutamate 5-semialdehyde. The sequence is that of N-acetyl-gamma-glutamyl-phosphate reductase from Campylobacter jejuni subsp. jejuni serotype O:6 (strain 81116 / NCTC 11828).